A 193-amino-acid chain; its full sequence is dCTP deaminase (193 aa).

DCTP-binding positions include 110–115 (RSSLAR), D128, 136–138 (VLE), Y171, K178, and Q182. The Proton donor/acceptor role is filled by E138.

It belongs to the dCTP deaminase family. As to quaternary structure, homotrimer.

It carries out the reaction dCTP + H2O + H(+) = dUTP + NH4(+). Its pathway is pyrimidine metabolism; dUMP biosynthesis; dUMP from dCTP (dUTP route): step 1/2. In terms of biological role, catalyzes the deamination of dCTP to dUTP. The protein is dCTP deaminase of Buchnera aphidicola subsp. Baizongia pistaciae (strain Bp).